A 186-amino-acid polypeptide reads, in one-letter code: UPF0301 protein Saro_0683 (186 aa).

This sequence belongs to the UPF0301 (AlgH) family.

The sequence is that of UPF0301 protein Saro_0683 from Novosphingobium aromaticivorans (strain ATCC 700278 / DSM 12444 / CCUG 56034 / CIP 105152 / NBRC 16084 / F199).